We begin with the raw amino-acid sequence, 443 residues long: Thymidine phosphorylase (443 aa).

This sequence belongs to the thymidine/pyrimidine-nucleoside phosphorylase family. Homodimer.

The enzyme catalyses thymidine + phosphate = 2-deoxy-alpha-D-ribose 1-phosphate + thymine. It functions in the pathway pyrimidine metabolism; dTMP biosynthesis via salvage pathway; dTMP from thymine: step 1/2. The enzymes which catalyze the reversible phosphorolysis of pyrimidine nucleosides are involved in the degradation of these compounds and in their utilization as carbon and energy sources, or in the rescue of pyrimidine bases for nucleotide synthesis. The chain is Thymidine phosphorylase from Sodalis glossinidius (strain morsitans).